The following is a 511-amino-acid chain: Thioredoxin reductase 2, mitochondrial (511 aa).

Residues 1–21 (MAALRGAAARFRGRAPGGARG) constitute a mitochondrion transit peptide. Residue 29–58 (DLLVIGGGSGGLACAKEAAQLGKKVAVLDY) coordinates FAD. Cysteines 74 and 79 form a disulfide. An N6-succinyllysine modification is found at K316. H484 functions as the Proton acceptor in the catalytic mechanism. The segment at residues 509-510 (CU) is a cross-link (cysteinyl-selenocysteine (Cys-Sec)). A non-standard amino acid (selenocysteine) is located at residue U510.

Belongs to the class-I pyridine nucleotide-disulfide oxidoreductase family. In terms of assembly, homodimer. It depends on FAD as a cofactor.

It localises to the mitochondrion. It carries out the reaction [thioredoxin]-dithiol + NADP(+) = [thioredoxin]-disulfide + NADPH + H(+). Inhibited by 1-chloro-2,4-dinitrobenzene and by zinc, calcium, magnesium and Fe(2+) ions. In terms of biological role, involved in the control of reactive oxygen species levels and the regulation of mitochondrial redox homeostasis. Maintains thioredoxin in a reduced state. May play a role in redox-regulated cell signaling. This chain is Thioredoxin reductase 2, mitochondrial (TXNRD2), found in Bos taurus (Bovine).